Consider the following 360-residue polypeptide: Peptide chain release factor 1 (360 aa).

Position 237 is an N5-methylglutamine (glutamine 237).

The protein belongs to the prokaryotic/mitochondrial release factor family. Methylated by PrmC. Methylation increases the termination efficiency of RF1.

The protein localises to the cytoplasm. Peptide chain release factor 1 directs the termination of translation in response to the peptide chain termination codons UAG and UAA. The sequence is that of Peptide chain release factor 1 from Pseudomonas fluorescens (strain SBW25).